A 600-amino-acid chain; its full sequence is DNA mismatch repair protein MutL (600 aa).

The protein belongs to the DNA mismatch repair MutL/HexB family.

Its function is as follows. This protein is involved in the repair of mismatches in DNA. It is required for dam-dependent methyl-directed DNA mismatch repair. May act as a 'molecular matchmaker', a protein that promotes the formation of a stable complex between two or more DNA-binding proteins in an ATP-dependent manner without itself being part of a final effector complex. In Sinorhizobium fredii (strain NBRC 101917 / NGR234), this protein is DNA mismatch repair protein MutL.